Consider the following 376-residue polypeptide: Ribonucleoside-diphosphate reductase 1 subunit beta (376 aa).

Fe cation contacts are provided by aspartate 85, glutamate 116, and histidine 119. The active site involves tyrosine 123. Glutamate 205, glutamate 239, and histidine 242 together coordinate Fe cation.

This sequence belongs to the ribonucleoside diphosphate reductase small chain family. Tetramer of two alpha (R1) and two beta (R2) subunits. The B1 protein is a dimer of alpha subunits. A radical transfer pathway occurs between Tyr-123 of R2 and R1. The cofactor is Fe cation.

The catalysed reaction is a 2'-deoxyribonucleoside 5'-diphosphate + [thioredoxin]-disulfide + H2O = a ribonucleoside 5'-diphosphate + [thioredoxin]-dithiol. Its function is as follows. Provides the precursors necessary for DNA synthesis. Catalyzes the biosynthesis of deoxyribonucleotides from the corresponding ribonucleotides. R2 contains the tyrosyl radical required for catalysis. The sequence is that of Ribonucleoside-diphosphate reductase 1 subunit beta (nrdB) from Escherichia coli O157:H7.